We begin with the raw amino-acid sequence, 503 residues long: Protein ERGIC-53-like (503 aa).

The first 25 residues, 1–25 (MLKTGGLSPSLCLLSLLLALHSAER), serve as a signal peptide directing secretion. Residues 26 to 439 (SYPPPQRRFE…WLPGFSTCLR (414 aa)) are Lumenal-facing. In terms of domain architecture, L-type lectin-like spans 32–253 (RRFEYKLSFK…DVLSFLTFSL (222 aa)). The cysteines at positions 177 and 216 are disulfide-linked. The helical transmembrane segment at 440-460 (TSIFLFFLLIQTVGFFCYMNF) threads the bilayer. Residues 461–503 (RQELDKRLQEYLFTESISLQPALPIPRTIGVLRRQPVSPSMQA) are Cytoplasmic-facing.

In terms of tissue distribution, predominantly expressed in the sublingual salivary gland, in the mucous cells of the acini, but not in the serous cells, nor in the duct system (at protein level). Not detected in the submandilar, nor the parotid glands. Expressed in the mucous glands, but not detected in the serous glands (at protein level). Besides the salivary glands, expressed in the Brunner's glands in the duodenum, but no other mucous or serous glands (at protein level).

It localises to the endoplasmic reticulum-Golgi intermediate compartment membrane. The sequence is that of Protein ERGIC-53-like (Lman1l) from Rattus norvegicus (Rat).